Consider the following 627-residue polypeptide: Chaperone protein HtpG (627 aa).

An a; substrate-binding region spans residues 1–343 (MATQEFQAET…SEDLSLNISR (343 aa)). The segment at 344 to 553 (EMLQQDKQLK…EGEISIEMEK (210 aa)) is b. The segment at 554–627 (VLQSMPNNQN…YTNNVCKIMS (74 aa)) is c.

It belongs to the heat shock protein 90 family. Homodimer.

Its subcellular location is the cytoplasm. Functionally, molecular chaperone. Has ATPase activity. The chain is Chaperone protein HtpG from Natranaerobius thermophilus (strain ATCC BAA-1301 / DSM 18059 / JW/NM-WN-LF).